We begin with the raw amino-acid sequence, 145 residues long: Large ribosomal subunit protein uL14m (145 aa).

A mitochondrion-targeting transit peptide spans 1–30; it reads MAFSSGLWGPCVHMSRAFSQRCFSTTGSLG.

This sequence belongs to the universal ribosomal protein uL14 family. Component of the mitochondrial ribosome large subunit (39S) which comprises a 16S rRNA and about 50 distinct proteins. Interacts with MALSU1.

The protein localises to the mitochondrion. In terms of biological role, may form part of 2 intersubunit bridges in the assembled ribosome. Upon binding to MALSU1, intersubunit bridge formation is blocked, preventing ribosome formation and repressing translation. The protein is Large ribosomal subunit protein uL14m (MRPL14) of Bos taurus (Bovine).